Here is an 861-residue protein sequence, read N- to C-terminus: DNA mismatch repair protein MutS (861 aa).

Residue 616–623 coordinates ATP; sequence GPNMGGKS.

Belongs to the DNA mismatch repair MutS family.

Its function is as follows. This protein is involved in the repair of mismatches in DNA. It is possible that it carries out the mismatch recognition step. This protein has a weak ATPase activity. The sequence is that of DNA mismatch repair protein MutS from Haemophilus influenzae (strain 86-028NP).